The chain runs to 155 residues: MRPVVRVIREDWADTALPLPGYETAGAAGADLRANLPPESRAEGLVLAPLGRVLVPTGLRIEIPDGFEVQIRPRSGLALKHGISLPNSPGTIDSDYRGPLGVILVNLGDEPFRVAHGDRIAQMVVAPVVQARFELADGLGATARGAGGFGSTGTA.

Substrate contacts are provided by residues 74 to 76 (RSG), asparagine 87, and 91 to 93 (TID).

Belongs to the dUTPase family. It depends on Mg(2+) as a cofactor.

It catalyses the reaction dUTP + H2O = dUMP + diphosphate + H(+). Its pathway is pyrimidine metabolism; dUMP biosynthesis; dUMP from dCTP (dUTP route): step 2/2. Its function is as follows. This enzyme is involved in nucleotide metabolism: it produces dUMP, the immediate precursor of thymidine nucleotides and it decreases the intracellular concentration of dUTP so that uracil cannot be incorporated into DNA. This Cereibacter sphaeroides (strain ATCC 17023 / DSM 158 / JCM 6121 / CCUG 31486 / LMG 2827 / NBRC 12203 / NCIMB 8253 / ATH 2.4.1.) (Rhodobacter sphaeroides) protein is Deoxyuridine 5'-triphosphate nucleotidohydrolase.